We begin with the raw amino-acid sequence, 151 residues long: FUN14 domain-containing protein 1A (151 aa).

The short motif at Y14–L17 is the YXXL element. Transmembrane regions (helical) follow at residues Y44–F64, A71–I91, and F130–A150.

This sequence belongs to the FUN14 family.

Its subcellular location is the mitochondrion outer membrane. In terms of biological role, acts as an activator of hypoxia-induced mitophagy, an important mechanism for mitochondrial quality control. This is FUN14 domain-containing protein 1A (fundc1-a) from Xenopus laevis (African clawed frog).